The following is a 371-amino-acid chain: N-acetyldiaminopimelate deacetylase (371 aa).

The active site involves aspartate 68. The Proton acceptor role is filled by glutamate 127.

This sequence belongs to the peptidase M20A family. N-acetyldiaminopimelate deacetylase subfamily.

The enzyme catalyses N-acetyl-(2S,6S)-2,6-diaminopimelate + H2O = (2S,6S)-2,6-diaminopimelate + acetate. It participates in amino-acid biosynthesis; L-lysine biosynthesis via DAP pathway; LL-2,6-diaminopimelate from (S)-tetrahydrodipicolinate (acetylase route): step 3/3. Catalyzes the conversion of N-acetyl-diaminopimelate to diaminopimelate and acetate. The chain is N-acetyldiaminopimelate deacetylase from Oceanobacillus iheyensis (strain DSM 14371 / CIP 107618 / JCM 11309 / KCTC 3954 / HTE831).